Reading from the N-terminus, the 100-residue chain is Urease subunit gamma (100 aa).

Belongs to the urease gamma subunit family. As to quaternary structure, heterotrimer of UreA (gamma), UreB (beta) and UreC (alpha) subunits. Three heterotrimers associate to form the active enzyme.

It is found in the cytoplasm. It catalyses the reaction urea + 2 H2O + H(+) = hydrogencarbonate + 2 NH4(+). The protein operates within nitrogen metabolism; urea degradation; CO(2) and NH(3) from urea (urease route): step 1/1. In Aliivibrio fischeri (strain ATCC 700601 / ES114) (Vibrio fischeri), this protein is Urease subunit gamma.